A 397-amino-acid polypeptide reads, in one-letter code: tRNA-specific 2-thiouridylase MnmA (397 aa).

ATP contacts are provided by residues 19 to 26 (AMSGGVDS) and Leu-45. Catalysis depends on Cys-113, which acts as the Nucleophile. A disulfide bridge links Cys-113 with Cys-210. Gly-137 provides a ligand contact to ATP. Residues 160–162 (RDQ) form an interaction with tRNA region. The active-site Cysteine persulfide intermediate is Cys-210.

This sequence belongs to the MnmA/TRMU family.

Its subcellular location is the cytoplasm. The catalysed reaction is S-sulfanyl-L-cysteinyl-[protein] + uridine(34) in tRNA + AH2 + ATP = 2-thiouridine(34) in tRNA + L-cysteinyl-[protein] + A + AMP + diphosphate + H(+). Catalyzes the 2-thiolation of uridine at the wobble position (U34) of tRNA, leading to the formation of s(2)U34. This is tRNA-specific 2-thiouridylase MnmA from Bradyrhizobium sp. (strain ORS 278).